The chain runs to 498 residues: Glutamate--tRNA ligase (498 aa).

The 'HIGH' region signature appears at 11 to 21 (PSPTGHLHIGN). The 'KMSKS' region signature appears at 261–265 (KLSKR). ATP is bound at residue K264.

Belongs to the class-I aminoacyl-tRNA synthetase family. Glutamate--tRNA ligase type 1 subfamily. In terms of assembly, monomer.

Its subcellular location is the cytoplasm. The enzyme catalyses tRNA(Glu) + L-glutamate + ATP = L-glutamyl-tRNA(Glu) + AMP + diphosphate. Its function is as follows. Catalyzes the attachment of glutamate to tRNA(Glu) in a two-step reaction: glutamate is first activated by ATP to form Glu-AMP and then transferred to the acceptor end of tRNA(Glu). The protein is Glutamate--tRNA ligase of Oenococcus oeni (strain ATCC BAA-331 / PSU-1).